We begin with the raw amino-acid sequence, 357 residues long: Protein-arginine kinase (357 aa).

The 232-residue stretch at Ile24–Ala255 folds into the Phosphagen kinase C-terminal domain. ATP-binding positions include Ser27–Arg31, His92, Arg126, Arg177–Met181, and Arg208–Glu213. Positions Arg338–Ala343 match the RDXXRA motif of the pArg binding pocket involved in allosteric regulation motif.

The protein belongs to the ATP:guanido phosphotransferase family.

The enzyme catalyses L-arginyl-[protein] + ATP = N(omega)-phospho-L-arginyl-[protein] + ADP + H(+). Appears to be allosterically activated by the binding of pArg-containing polypeptides to the pArg-binding pocket localized in the C-terminal domain of McsB. Its function is as follows. Catalyzes the specific phosphorylation of arginine residues in proteins. This chain is Protein-arginine kinase, found in Brevibacillus brevis (strain 47 / JCM 6285 / NBRC 100599).